The primary structure comprises 214 residues: MTIGIVGRKSGMTRIFTDDGLSVPVTVVEVDPNRITQVKSVETDGYAAVQVTVGSRRASRVSKPEAGHFAKAEVEAGRTVLELRNESGEQFEVGGLLTVEAFEAGQKVDVTGASKGKGFAGVIKRYNFRMQDATHGNSLSHRAPGSIGQCQTPGRVFKGKKMAGHMGAARVTTQNLEVVRVDVERNLLLIKGAVPGAPGGDVIIRPAVKSRNNG.

An N5-methylglutamine modification is found at glutamine 151.

This sequence belongs to the universal ribosomal protein uL3 family. Part of the 50S ribosomal subunit. Forms a cluster with proteins L14 and L19. In terms of processing, methylated by PrmB.

In terms of biological role, one of the primary rRNA binding proteins, it binds directly near the 3'-end of the 23S rRNA, where it nucleates assembly of the 50S subunit. The sequence is that of Large ribosomal subunit protein uL3 from Saccharophagus degradans (strain 2-40 / ATCC 43961 / DSM 17024).